Consider the following 424-residue polypeptide: Histidine--tRNA ligase (424 aa).

This sequence belongs to the class-II aminoacyl-tRNA synthetase family. Homodimer.

The protein localises to the cytoplasm. It carries out the reaction tRNA(His) + L-histidine + ATP = L-histidyl-tRNA(His) + AMP + diphosphate + H(+). The sequence is that of Histidine--tRNA ligase from Shewanella frigidimarina (strain NCIMB 400).